The following is an 827-amino-acid chain: MDSTDKNGESVSSVSSSRLQSRKPPNLSITIPPPEASAPGEQASMLPQRPRNPAYMKSVSLQEQRGRWQEGSSEKRPGFRRQASLSQSIRKGTAQWFGVSGDWEAKRQHWQRRSLHHCSVRYGRLKASCQRDLELPSQEVPSFQGTESPKPCKMPKIVDPLARGRAFRHPDEVDRPHAPHPPLTPGVLSLTSFTSVRSGHSHLPRRKRMSVAHMSFQAAAALLKGRSVLDATGQRCRVVKRSFAYPSFLEEDVVDGADTFDSSFFSKEEMSSMPDDVFESPPLSASYFRGIPRSASPVSPDGVQIPLKEYGRPPVAGTRRGKRIASKVKHFAFDRKKRHYGLGVVGNWLNRSYRRSISSTVQRQLESFDSHRPYFTYWLTFVHIIITLLVICTYGIAPVGFAQHVTTQLVLRNKGVYESVKYIQQENFWIGPSSIDLIHLGAKFSPCIRKDQQIEQLVLRERDLERDSGCCVQNDHSGCIQTQRKDCSETLATFVKWQDDTGPPMDKSDLGQKRTSGAVCHQDPRTCEEPASSGAHIWPDDITKWPICTEQAKSNRTGFLHMDCQIKGRPCCISTKGSCEITTREYCEFMHGYFHEEATLCSQVHCLDKVCGLLPFLNPEVPDQFYRLWLSLFLHAGVVHCLVSVVFQMTILRDLEKLAGWHRIAIIFILSGITGNLASAIFLPYRAEVGPAGSQFGLLACLFVELFQSWQLLERPWKAFLNLSAIVLFLFICGLLPWIDNIAHIFGFLSGLLLAFAFLPYITFGTSDKYRKRALILVSLLVFAGLFASLVIWLYVYPINWPWIEYLTCFPFTSRFCEKYELDQVLH.

The segment at 1–87 (MDSTDKNGES…GFRRQASLSQ (87 aa)) is disordered. Topologically, residues 1-380 (MDSTDKNGES…HRPYFTYWLT (380 aa)) are cytoplasmic. Phosphoserine is present on Ser-60. Over residues 64–77 (QRGRWQEGSSEKRP) the composition is skewed to basic and acidic residues. Phosphoserine is present on residues Ser-84, Ser-88, Ser-294, Ser-296, and Ser-299. The helical transmembrane segment at 381-401 (FVHIIITLLVICTYGIAPVGF) threads the bilayer. Topologically, residues 402 to 631 (AQHVTTQLVL…PDQFYRLWLS (230 aa)) are lumenal. A helical transmembrane segment spans residues 632-652 (LFLHAGVVHCLVSVVFQMTIL). Over 653-663 (RDLEKLAGWHR) the chain is Cytoplasmic. A helical transmembrane segment spans residues 664 to 684 (IAIIFILSGITGNLASAIFLP). The Lumenal segment spans residues 685–686 (YR). The chain crosses the membrane as a helical span at residues 687 to 707 (AEVGPAGSQFGLLACLFVELF). Residues 708 to 718 (QSWQLLERPWK) are Cytoplasmic-facing. A helical membrane pass occupies residues 719 to 739 (AFLNLSAIVLFLFICGLLPWI). The Lumenal portion of the chain corresponds to 740–744 (DNIAH). A helical membrane pass occupies residues 745–765 (IFGFLSGLLLAFAFLPYITFG). Topologically, residues 766 to 773 (TSDKYRKR) are cytoplasmic. A helical membrane pass occupies residues 774–794 (ALILVSLLVFAGLFASLVIWL). Topologically, residues 795–827 (YVYPINWPWIEYLTCFPFTSRFCEKYELDQVLH) are lumenal.

This sequence belongs to the peptidase S54 family. In terms of assembly, interacts with EGF. Interacts (via cytoplasmic N-terminus) with FRMD8/iTAP; this interaction leads to mutual protein stabilization. Interacts with ADAM17/TACE. As to expression, detected in retina and spleen.

It is found in the endoplasmic reticulum membrane. Its subcellular location is the cell membrane. Regulates ADAM17 protease, a sheddase of the epidermal growth factor (EGF) receptor ligands and TNF, thereby plays a role in sleep, cell survival, proliferation, migration and inflammation. Does not exhibit any protease activity on its own. The protein is Inactive rhomboid protein 2 (RHBDF2) of Canis lupus familiaris (Dog).